The chain runs to 1217 residues: Splicing factor 3B subunit 3 (1217 aa).

2 interaction with PHF5A, SF3B1 and SF3B5 regions span residues 105 to 119 (ETFG…VPGQ) and 145 to 168 (NRDA…TLVY). S156 is modified (phosphoserine). Interaction with SF3B1 and SF3B5 regions lie at residues 193–231 (DNDP…LEEH) and 786–804 (RKFV…ETDH). The tract at residues 1028–1049 (TYPRWVTTASLLDYDTVAGADK) is interaction with SF3B1. The interval 1100–1123 (TVLSLQKTTLIPGGSESLVYTTLS) is interaction with SF3B5. Phosphothreonine is present on T1200.

The protein belongs to the RSE1 family. Component of the 17S U2 SnRNP complex, a ribonucleoprotein complex that contains small nuclear RNA (snRNA) U2 and a number of specific proteins. Part of the SF3B subcomplex of the 17S U2 SnRNP complex. SF3B associates with the splicing subcomplex SF3A and a 12S RNA unit to form the U2 small nuclear ribonucleoproteins complex (U2 snRNP). Within the SF3B subcomplex, interacts directly with SF3B1 (via HEAT domain), SF3B5 and PHF5A. Identified in the spliceosome A complex; remains associated with the spliceosome throughout the splicing process. Component of the spliceosome B complex. Identified in the spliceosome C complex. Identified in the spliceosome E complex. Component of the minor (U12-type spliceosome) spliceosome. Within this complex, interacts with SCNM1. Associates with the STAGA transcription coactivator-HAT complex. Interacts with SUPT3H. Interacts with TAF3.

The protein resides in the nucleus. Functionally, component of the 17S U2 SnRNP complex of the spliceosome, a large ribonucleoprotein complex that removes introns from transcribed pre-mRNAs. The 17S U2 SnRNP complex (1) directly participates in early spliceosome assembly and (2) mediates recognition of the intron branch site during pre-mRNA splicing by promoting the selection of the pre-mRNA branch-site adenosine, the nucleophile for the first step of splicing. Within the 17S U2 SnRNP complex, SF3B3 is part of the SF3B subcomplex, which is required for 'A' complex assembly formed by the stable binding of U2 snRNP to the branchpoint sequence in pre-mRNA. Sequence independent binding of SF3A and SF3B subcomplexes upstream of the branch site is essential, it may anchor U2 snRNP to the pre-mRNA. May also be involved in the assembly of the 'E' complex. Also acts as a component of the minor spliceosome, which is involved in the splicing of U12-type introns in pre-mRNAs. The polypeptide is Splicing factor 3B subunit 3 (SF3B3) (Bos taurus (Bovine)).